Here is a 528-residue protein sequence, read N- to C-terminus: Peptide chain release factor 3 (528 aa).

In terms of domain architecture, tr-type G spans 11–279 (EKRRTFAIIS…GLVEWAPKPL (269 aa)). Residues 20 to 27 (SHPDAGKT), 88 to 92 (DTPGH), and 142 to 145 (NKCD) each bind GTP.

It belongs to the TRAFAC class translation factor GTPase superfamily. Classic translation factor GTPase family. PrfC subfamily.

The protein resides in the cytoplasm. Increases the formation of ribosomal termination complexes and stimulates activities of RF-1 and RF-2. It binds guanine nucleotides and has strong preference for UGA stop codons. It may interact directly with the ribosome. The stimulation of RF-1 and RF-2 is significantly reduced by GTP and GDP, but not by GMP. The sequence is that of Peptide chain release factor 3 from Psychromonas ingrahamii (strain DSM 17664 / CCUG 51855 / 37).